Consider the following 642-residue polypeptide: MSSTFRAPAGAATVFTADQKIRLGRLDALRSSHSVFLGRYGRGGVPVPPSASSSSSSPIQAVSTPAKPETATKRSKVEIIKEKSNFIRYPLNEELLTEAPNVNESAVQLIKFHGSYQQYNREERGGRSYSFMLRTKNPSGKVPNQLYLTMDDLADEFGIGTLRLTTRQTFQLHGVLKQNLKTVMSSIIKNMGSTLGACGDLNRNVLAPAAPYVKKDYLFAQETADNIAALLSPQSGFYYDMWVDGEQFMTAEPPEVVKARNDNSHGTNFVDSPEPIYGTQFLPRKFKVAVTVPTDNSVDLLTNDIGVVVVSDENGEPQGFNIYVGGGMGRTHRMESTFARLAEPIGYVPKEDILYAVKAIVVTQREHGRRDDRKYSRMKYLISSWGIEKFRDVVEQYYGKKFEPSRELPEWEFKSYLGWHEQGDGAWFCGLHVDSGRVGGIMKKTLREVIEKYKIDVRITPNQNIVLCDIKTEWKRPITTVLAQAGLLQPEFVDPLNQTAMACPAFPLCPLAITEAERGIPSILKRVRAMFEKVGLDYDESVVIRVTGCPNGCARPYMAELGLVGDGPNSYQVWLGGTPNLTQIARSFMDKVKVHDLEKVCEPLFYHWKLERQTKESFGEYTTRMGFEKLKELIDTYKGVSQ.

A chloroplast-targeting transit peptide spans 1-61; that stretch reads MSSTFRAPAG…SSSSSSPIQA (61 aa). The disordered stretch occupies residues 46-74; it reads PVPPSASSSSSSPIQAVSTPAKPETATKR. [4Fe-4S] cluster contacts are provided by Cys503, Cys509, Cys549, and Cys553. Cys553 serves as a coordination point for siroheme.

This sequence belongs to the nitrite and sulfite reductase 4Fe-4S domain family. Monomer. Interacts with ferredoxin. Requires siroheme as cofactor. The cofactor is [4Fe-4S] cluster. Phosphorylated; this phosphorylation reduces DNA-binding. In terms of tissue distribution, present in leaves and roots.

Its subcellular location is the plastid. It is found in the chloroplast stroma. The protein localises to the chloroplast nucleoid. The protein resides in the plastid stroma. It catalyses the reaction hydrogen sulfide + 6 oxidized [2Fe-2S]-[ferredoxin] + 3 H2O = sulfite + 6 reduced [2Fe-2S]-[ferredoxin] + 7 H(+). Its function is as follows. Essential protein with sulfite reductase activity required in assimilatory sulfate reduction pathway during both primary and secondary metabolism and thus involved in development and growth. In terms of biological role, DNA-binding protein that binds to both double-stranded and single-stranded DNA without significant sequence specificity to reversibly repress the transcriptional activity of chloroplast nucleoids by promoting DNA compaction and possibly regulate DNA replication. The chain is Assimilatory sulfite reductase (ferredoxin), chloroplastic (SIR) from Arabidopsis thaliana (Mouse-ear cress).